A 1334-amino-acid chain; its full sequence is Aldehyde oxidase 1 (1334 aa).

Residues 5 to 92 (PELLFYVNGR…GAAVTTVEGI (88 aa)) enclose the 2Fe-2S ferredoxin-type domain. 4 residues coordinate [2Fe-2S] cluster: Cys-44, Cys-49, Cys-52, and Cys-74. Gln-113 is a Mo-molybdopterin binding site. Residues Cys-114, Cys-117, Cys-149, and Cys-151 each contribute to the [2Fe-2S] cluster site. Cys-151 serves as a coordination point for Mo-molybdopterin. An FAD-binding PCMH-type domain is found at 236 to 421 (FSGERMMWIS…ASVHIPYSRK (186 aa)). FAD-binding positions include 264–271 (VVMGNTSV), Ala-345, Ser-354, His-358, Asp-367, and Leu-411. Mo-molybdopterin is bound by residues 802–803 (AF) and Met-1043. Ser-1064 is modified (phosphoserine). Mo-molybdopterin contacts are provided by residues 1084-1087 (GSVV), Gln-1199, and Leu-1264. Glu-1266 serves as the catalytic Proton acceptor; for azaheterocycle hydroxylase activity.

This sequence belongs to the xanthine dehydrogenase family. As to quaternary structure, homodimer. [2Fe-2S] cluster is required as a cofactor. Requires FAD as cofactor. Mo-molybdopterin serves as cofactor. Post-translationally, the N-terminus is blocked. As to expression, very high expression in liver and lung. High expression in kidney, pancreas, brain stem and spinal cord. Moderate expression in heart, testis, eye, cerebral cortex and cerebellum. Low expression in stomach and muscle.

Its subcellular location is the cytoplasm. The catalysed reaction is an aldehyde + O2 + H2O = a carboxylate + H2O2 + H(+). It carries out the reaction retinal + O2 + H2O = retinoate + H2O2 + H(+). It catalyses the reaction all-trans-retinal + O2 + H2O = all-trans-retinoate + H2O2 + H(+). Its activity is regulated as follows. Inhibited by hydralazine and menadione. Not inhibited by BOF-4272 or allopurinol, xanthine dehydrogenase potent inhibitors. In contrast to guinea pig, human and rat, isovanillin is not an inhibitor but a substrate for AOX1 in rabbit. Its function is as follows. Oxidase with broad substrate specificity, oxidizing aromatic azaheterocycles, such as N1-methylnicotinamide, N-methylphthalazinium and phthalazine, as well as aldehydes, such as benzaldehyde, retinal, pyridoxal, and vanillin. Plays a key role in the metabolism of xenobiotics and drugs containing aromatic azaheterocyclic substituents. Participates in the bioactivation of prodrugs such as famciclovir, catalyzing the oxidation step from 6-deoxypenciclovir to penciclovir, which is a potent antiviral agent. Is probably involved in the regulation of reactive oxygen species homeostasis. May be a prominent source of superoxide generation via the one-electron reduction of molecular oxygen. May also catalyze nitric oxide (NO) production via the reduction of nitrite to NO with NADH or aldehyde as electron donor. May play a role in adipogenesis. Cannot use hypoxanthine and all-trans-retinol as substrate. This chain is Aldehyde oxidase 1, found in Oryctolagus cuniculus (Rabbit).